We begin with the raw amino-acid sequence, 836 residues long: MDFPGTLRPSLFKAGPLGMTDGPDLSFMCSWRDALTLPGSQPQNCKDPTLSFAKNLLWEPSTPGPLPLLMPPDPDPWDPGVTAQDFLFRGGHCYQYQSQAVLDVTEQLSRFLWDHGDIAFAPLGRLMLENFRLEGNRGYSKKMTIVSAKKLLQDLGGHQPWGCPWASLSRRLRRFSIVGGPVLSRSVSLLMGKLLHEELAMRWEQLLMDEAFTGGALAWLPGRTARAGQLVYPSGGALDKLYFQEVSVTSGGNPRILENPGHVQLRGPVRQVVTSTVQGETLLAVRSDYHCATWKIDKQGPPALLQVMQVEKGATGISLSPHLSGELAICSRSGAVCLWTPQAGLQTIYKDTETLAFRDPSPWRWADFTAHPRVLTVGDRTGVKMVDIQGPPGCGLLLFRAGAEAACQKGERVLLAQYLGQPGQTPPSLHLICTQFSIYLMDERLPLVPMLKWDHGLPSAPLLARLLPPASPGHPRPLLLGGQGGQLQLLHITGEGTSMPQLAGPPQSLPSITESLSAFPLLEPKKQQLLQERLEAPVIGLAAVPLCASAPGLLLFQLSAAGDVFYQHLRLLQASSPRKVPEQATAPSVDQVSTPSWTPQASARCSRWLEDLMELSPTRPLWVAPTFSHRRFLGHMERQKSQETMPQKLRAAMAKGQLLRPGDLSTLPRAEPPPAPQCSQQDELTERLTEAWEGRVTAWWRRHRGETSETQTQSKRPKRRTQLSSTFSSFTSYLDSPDASSAPRSQDLSTSEARLQSPRVPPSQELTQEVWGQGVKRERRQTLRDHTDKLPLKRDTPGPVATPPSQASSLQTMSFRQQTPVHSGSQPPQKKPRMGF.

Disordered regions lie at residues 662 to 683 (GDLSTLPRAEPPPAPQCSQQDE) and 703 to 836 (HRGE…RMGF). Residues 738-754 (DASSAPRSQDLSTSEAR) show a composition bias toward polar residues. Basic and acidic residues predominate over residues 780–796 (RQTLRDHTDKLPLKRDT). A Phosphothreonine modification is found at Thr802. The segment covering 803–828 (PPSQASSLQTMSFRQQTPVHSGSQPP) has biased composition (polar residues).

As to quaternary structure, component of the transcription factor SL1/TIF-IB complex, composed of TBP and at least TAF1A, TAF1B, TAF1C and TAF1D. In the complex interacts directly with TBP, TAF1A and TAF1B. Interaction of the SL1/TIF-IB subunits with TBP excludes interaction of TBP with the transcription factor IID (TFIID) subunits. Interacts with MYC and RRN3. Interacts with p53/TP53; the interaction prevents the association of SL1/TIF-IB with UBTF and represses RNA polymerase I transcription. Part of Pol I pre-initiation complex (PIC), in which Pol I core assembles with RRN3 and promoter-bound UTBF and SL1/TIF-IB complex.

The protein localises to the nucleus. The protein resides in the nucleolus. In terms of biological role, component of the transcription factor SL1/TIF-IB complex, which is involved in the assembly of the PIC (pre-initiation complex) during RNA polymerase I-dependent transcription. The rate of PIC formation probably is primarily dependent on the rate of association of SL1/TIF-IB with the rDNA promoter. SL1/TIF-IB is involved in stabilization of nucleolar transcription factor 1/UBTF on rDNA. Formation of SL1/TIF-IB excludes the association of TBP with TFIID subunits. Recruits RNA polymerase I to the rRNA gene promoter via interaction with RRN3. The chain is TATA box-binding protein-associated factor RNA polymerase I subunit C (Taf1c) from Mus musculus (Mouse).